Consider the following 303-residue polypeptide: Coenzyme PQQ synthesis protein B (303 aa).

The protein belongs to the PqqB family.

Its pathway is cofactor biosynthesis; pyrroloquinoline quinone biosynthesis. Functionally, may be involved in the transport of PQQ or its precursor to the periplasm. The sequence is that of Coenzyme PQQ synthesis protein B from Pseudomonas savastanoi pv. phaseolicola (strain 1448A / Race 6) (Pseudomonas syringae pv. phaseolicola (strain 1448A / Race 6)).